Consider the following 132-residue polypeptide: Outer membrane protein assembly factor BamE (132 aa).

An N-terminal signal peptide occupies residues methionine 1–glycine 16. A lipid anchor (N-palmitoyl cysteine) is attached at cysteine 17. Cysteine 17 is lipidated: S-diacylglycerol cysteine.

It belongs to the BamE family. In terms of assembly, part of the Bam complex.

The protein localises to the cell outer membrane. Functionally, part of the outer membrane protein assembly complex, which is involved in assembly and insertion of beta-barrel proteins into the outer membrane. In Acinetobacter pittii (strain PHEA-2), this protein is Outer membrane protein assembly factor BamE.